The primary structure comprises 195 residues: Pyridoxal 5'-phosphate synthase subunit PdxT (195 aa).

46–48 lines the L-glutamine pocket; sequence GES. Cys78 (nucleophile) is an active-site residue. Residues Arg107 and 136–137 contribute to the L-glutamine site; that span reads IR. Active-site charge relay system residues include His173 and Glu175.

The protein belongs to the glutaminase PdxT/SNO family. In the presence of PdxS, forms a dodecamer of heterodimers. Only shows activity in the heterodimer.

The catalysed reaction is aldehydo-D-ribose 5-phosphate + D-glyceraldehyde 3-phosphate + L-glutamine = pyridoxal 5'-phosphate + L-glutamate + phosphate + 3 H2O + H(+). The enzyme catalyses L-glutamine + H2O = L-glutamate + NH4(+). It functions in the pathway cofactor biosynthesis; pyridoxal 5'-phosphate biosynthesis. Functionally, catalyzes the hydrolysis of glutamine to glutamate and ammonia as part of the biosynthesis of pyridoxal 5'-phosphate. The resulting ammonia molecule is channeled to the active site of PdxS. In Dehalococcoides mccartyi (strain CBDB1), this protein is Pyridoxal 5'-phosphate synthase subunit PdxT.